A 983-amino-acid chain; its full sequence is ER membrane protein complex subunit 1 (983 aa).

The first 16 residues, 1 to 16 (MAAGLWALLLPLAAAV), serve as a signal peptide directing secretion. At 17 to 952 (YEDQVGKFDW…FDVLKDDYDY (936 aa)) the chain is on the lumenal side. A disulfide bridge links C221 with C231. N279 carries N-linked (GlcNAc...) asparagine glycosylation. C332 and C360 are disulfide-bonded. 3 N-linked (GlcNAc...) asparagine glycosylation sites follow: N362, N808, and N903. Residues 953-973 (VLISSVLFGLVFATMITKRLA) form a helical membrane-spanning segment. Topologically, residues 974–983 (QVKLLNRAWR) are cytoplasmic.

This sequence belongs to the EMC1 family. In terms of assembly, component of the ER membrane protein complex (EMC).

The protein resides in the endoplasmic reticulum membrane. Functionally, part of the endoplasmic reticulum membrane protein complex (EMC) that enables the energy-independent insertion into endoplasmic reticulum membranes of newly synthesized membrane proteins. Preferentially accommodates proteins with transmembrane domains that are weakly hydrophobic or contain destabilizing features such as charged and aromatic residues. Involved in the cotranslational insertion of multi-pass membrane proteins in which stop-transfer membrane-anchor sequences become ER membrane spanning helices. It is also required for the post-translational insertion of tail-anchored/TA proteins in endoplasmic reticulum membranes. By mediating the proper cotranslational insertion of N-terminal transmembrane domains in an N-exo topology, with translocated N-terminus in the lumen of the ER, controls the topology of multi-pass membrane proteins like the G protein-coupled receptors. By regulating the insertion of various proteins in membranes, it is indirectly involved in many cellular processes. This is ER membrane protein complex subunit 1 (EMC1) from Gallus gallus (Chicken).